The primary structure comprises 189 residues: Density-regulated protein homolog (189 aa).

Positions 105 to 172 constitute an SUI1 domain; it reads ICVSRAARGK…DLFDVIPEKW (68 aa).

It belongs to the DENR family. As to quaternary structure, interacts with MCTS1.

Functionally, regulates translation as part of a complex with MCTS1. Specifically required for translational re-initiation in mRNAs containing upstream open reading frames (uORFs). Not required for standard translational initiation. Regulates expression of a subset of gene products including mbc, InR and EcR. This Drosophila melanogaster (Fruit fly) protein is Density-regulated protein homolog.